Here is a 916-residue protein sequence, read N- to C-terminus: Cadherin-4 (916 aa).

A signal peptide spans Met-1–Ala-20. Positions His-21–Arg-169 are excised as a propeptide. Residues Thr-124 to Lys-168 form a disordered region. A compositionally biased stretch (basic residues) spans Ser-129 to Lys-138. Cadherin domains follow at residues Asp-170–Phe-277, Ile-278–Phe-392, Thr-393–Phe-507, Pro-508–Pro-613, and Glu-614–Ala-724. Residues Asp-170 to Ala-734 lie on the Extracellular side of the membrane. N-linked (GlcNAc...) asparagine glycosylation is found at Asn-283, Asn-412, Asn-557, Asn-632, Asn-661, and Asn-702. Residues Ile-735–Met-756 form a helical membrane-spanning segment. Topologically, residues Lys-757–Asp-916 are cytoplasmic. Residues Met-806 to His-838 are disordered.

As to expression, expressed mainly in brain but also found in other tissues.

Its subcellular location is the cell membrane. In terms of biological role, cadherins are calcium-dependent cell adhesion proteins. They preferentially interact with themselves in a homophilic manner in connecting cells; cadherins may thus contribute to the sorting of heterogeneous cell types. May play an important role in retinal development. The chain is Cadherin-4 (CDH4) from Homo sapiens (Human).